The following is a 613-amino-acid chain: Phosphomethylpyrimidine synthase (613 aa).

Substrate-binding positions include Asn215, Met244, Tyr273, His309, 329 to 331 (SRG), 370 to 373 (DGLR), and Glu409. His413 is a binding site for Zn(2+). Tyr436 serves as a coordination point for substrate. Zn(2+) is bound at residue His477. 3 residues coordinate [4Fe-4S] cluster: Cys557, Cys560, and Cys565.

This sequence belongs to the ThiC family. In terms of assembly, homodimer. [4Fe-4S] cluster is required as a cofactor.

The enzyme catalyses 5-amino-1-(5-phospho-beta-D-ribosyl)imidazole + S-adenosyl-L-methionine = 4-amino-2-methyl-5-(phosphooxymethyl)pyrimidine + CO + 5'-deoxyadenosine + formate + L-methionine + 3 H(+). The protein operates within cofactor biosynthesis; thiamine diphosphate biosynthesis. Its function is as follows. Catalyzes the synthesis of the hydroxymethylpyrimidine phosphate (HMP-P) moiety of thiamine from aminoimidazole ribotide (AIR) in a radical S-adenosyl-L-methionine (SAM)-dependent reaction. The polypeptide is Phosphomethylpyrimidine synthase (Paramagnetospirillum magneticum (strain ATCC 700264 / AMB-1) (Magnetospirillum magneticum)).